We begin with the raw amino-acid sequence, 39 residues long: Basic phospholipase A2 (39 aa).

The Ca(2+) site is built by Y27, G29, and G31.

The protein belongs to the phospholipase A2 family. Group II subfamily. D49 sub-subfamily. Ca(2+) serves as cofactor. As to expression, expressed by the venom gland.

It is found in the secreted. The catalysed reaction is a 1,2-diacyl-sn-glycero-3-phosphocholine + H2O = a 1-acyl-sn-glycero-3-phosphocholine + a fatty acid + H(+). Is selectively inhibited by the gamma-phospholipase A2 inhibitor (PLI) CgMIP-I (AC P0DQP7) but not by the alpha-PLI CgMIP-II (AC P0DQP8). Its function is as follows. Snake venom phospholipase A2 (PLA2) that shows high myotoxic activities, induces mild edema, and shows cytolytic, and anti-coagulant activities, as well as intracerebral lethal effect. Does not induce lethality at a dose of 5 ug/g, when intravenously injected into mice. PLA2 catalyzes the calcium-dependent hydrolysis of the 2-acyl groups in 3-sn-phosphoglycerides. This chain is Basic phospholipase A2, found in Cerrophidion godmani (Porthidium godmani).